A 272-amino-acid polypeptide reads, in one-letter code: Small ribosomal subunit protein uS2 (272 aa).

The segment covering 224 to 233 has biased composition (basic and acidic residues); it reads EGKKAREERQ. The interval 224–272 is disordered; that stretch reads EGKKAREERQLAAAKDAAGDAKPEAEEAPAAAEAEEAPAAEAEEAPAAE. The segment covering 256–272 has biased composition (acidic residues); sequence EAEEAPAAEAEEAPAAE.

The protein belongs to the universal ribosomal protein uS2 family.

This is Small ribosomal subunit protein uS2 from Corynebacterium glutamicum (strain ATCC 13032 / DSM 20300 / JCM 1318 / BCRC 11384 / CCUG 27702 / LMG 3730 / NBRC 12168 / NCIMB 10025 / NRRL B-2784 / 534).